Consider the following 402-residue polypeptide: MAT+ sexual cell fertilization-promoting factor (402 aa).

Positions 169-237 (IPRPPNAYIL…KLMSAHPHYR (69 aa)) form a DNA-binding region, HMG box. Residues 246–272 (IRRRAPRRNRAQEVANASPIGENSGAP) are disordered.

It is found in the nucleus. In terms of biological role, controls fertilization, probably by determining the mating type. This Podospora anserina (Pleurage anserina) protein is MAT+ sexual cell fertilization-promoting factor (FPR1).